The sequence spans 41 residues: Photosystem I reaction center subunit IX (41 aa).

Residues tyrosine 7–isoleucine 27 form a helical membrane-spanning segment.

It belongs to the PsaJ family.

It localises to the plastid. Its subcellular location is the chloroplast thylakoid membrane. In terms of biological role, may help in the organization of the PsaE and PsaF subunits. The chain is Photosystem I reaction center subunit IX from Pleurastrum terricola (Filamentous green alga).